A 147-amino-acid chain; its full sequence is Large ribosomal subunit protein uL13 (147 aa).

Belongs to the universal ribosomal protein uL13 family. Part of the 50S ribosomal subunit.

This protein is one of the early assembly proteins of the 50S ribosomal subunit, although it is not seen to bind rRNA by itself. It is important during the early stages of 50S assembly. This Nocardia farcinica (strain IFM 10152) protein is Large ribosomal subunit protein uL13.